The chain runs to 56 residues: MMQDLINYFLSYPEVLKKLKNREACLIGFSSNETETIIKAYNDYHLSSPTTREWDG.

A propeptide spanning residues 1 to 50 is cleaved from the precursor; it reads MMQDLINYFLSYPEVLKKLKNREACLIGFSSNETETIIKAYNDYHLSSPT. W54 carries the post-translational modification Tryptophan derivative. W54 carries the 3'-farnesyl-2',N2-cyclotryptophan lipid modification.

As to quaternary structure, interacts directly with the sensor histidine kinase ComP and stimulates its activity. Post-translationally, trp-54 is modified by farnesylation, which is essential for activity. Modified by the tryptophan prenyltransferase ComQ before export to the extracellular environment. The type of isoprenyl derivative differs among the different pherotypes and depends on ComX primary sequence.

It is found in the secreted. Its function is as follows. Part of a major quorum-sensing system that regulates the development of genetic competence. Acts through the activation of the two-component regulatory system ComP/ComA composed of a sensor histidine kinase, ComP, and a response regulator, ComA. This chain is ComX pheromone, found in Bacillus mojavensis.